A 166-amino-acid polypeptide reads, in one-letter code: NADH-ubiquinone oxidoreductase chain 6 (166 aa).

A run of 5 helical transmembrane segments spans residues 1-21 (MMYFIYLLSVMLVLSFMAFAS), 26-46 (IYGGLSLVLSGGVGCGIIVSL), 47-67 (GGSFLGLIVFLVYLGGMLVVF), 86-106 (TVVLNLAIMVGMLGVVWYEFF), and 139-159 (CGGWELVFSGWILFLTIFVVL).

The protein belongs to the complex I subunit 6 family. As to quaternary structure, core subunit of respiratory chain NADH dehydrogenase (Complex I) which is composed of 45 different subunits.

The protein resides in the mitochondrion inner membrane. It carries out the reaction a ubiquinone + NADH + 5 H(+)(in) = a ubiquinol + NAD(+) + 4 H(+)(out). Functionally, core subunit of the mitochondrial membrane respiratory chain NADH dehydrogenase (Complex I) which catalyzes electron transfer from NADH through the respiratory chain, using ubiquinone as an electron acceptor. Essential for the catalytic activity and assembly of complex I. The polypeptide is NADH-ubiquinone oxidoreductase chain 6 (MT-ND6) (Tachyglossus aculeatus aculeatus (Southeast Australian short-beaked echidna)).